Here is a 382-residue protein sequence, read N- to C-terminus: Chaperone protein DnaJ (382 aa).

A J domain is found at 5-70; it reads DYYEVLGVSR…DKKAAYDRYG (66 aa). A CR-type zinc finger spans residues 141–219; sequence GVQKTINVPA…CHGAGRVEKE (79 aa). Zn(2+)-binding residues include Cys154, Cys157, Cys171, Cys174, Cys193, Cys196, Cys207, and Cys210. CXXCXGXG motif repeat units follow at residues 154 to 161, 171 to 178, 193 to 200, and 207 to 214; these read CDSCKGTG, CPTCSGMG, CPTCNGMG, and CKSCHGAG.

It belongs to the DnaJ family. As to quaternary structure, homodimer. It depends on Zn(2+) as a cofactor.

The protein localises to the cytoplasm. In terms of biological role, participates actively in the response to hyperosmotic and heat shock by preventing the aggregation of stress-denatured proteins and by disaggregating proteins, also in an autonomous, DnaK-independent fashion. Unfolded proteins bind initially to DnaJ; upon interaction with the DnaJ-bound protein, DnaK hydrolyzes its bound ATP, resulting in the formation of a stable complex. GrpE releases ADP from DnaK; ATP binding to DnaK triggers the release of the substrate protein, thus completing the reaction cycle. Several rounds of ATP-dependent interactions between DnaJ, DnaK and GrpE are required for fully efficient folding. Also involved, together with DnaK and GrpE, in the DNA replication of plasmids through activation of initiation proteins. This is Chaperone protein DnaJ from Cereibacter sphaeroides (strain ATCC 17025 / ATH 2.4.3) (Rhodobacter sphaeroides).